Reading from the N-terminus, the 353-residue chain is 26S proteasome non-ATPase regulatory subunit 8 (353 aa).

A disordered region spans residues 1–25 (MFIKGRAAKTPRGEPRRSSRGGRKL). A PCI domain is found at 165–334 (PSFERYMAQL…QQKPEDSTIP (170 aa)). Residue Lys-300 forms a Glycyl lysine isopeptide (Lys-Gly) (interchain with G-Cter in SUMO2) linkage.

Belongs to the proteasome subunit S14 family. Component of the 19S proteasome regulatory particle complex. The 26S proteasome consists of a 20S core particle (CP) and two 19S regulatory subunits (RP). The regulatory particle is made of a lid composed of 9 subunits including PSMD8, a base containing 6 ATPases and few additional components. Interacts with DDI2. Interacts with TASOR. As to expression, expressed in the Sertoli cells of the testis.

Component of the 26S proteasome, a multiprotein complex involved in the ATP-dependent degradation of ubiquitinated proteins. This complex plays a key role in the maintenance of protein homeostasis by removing misfolded or damaged proteins, which could impair cellular functions, and by removing proteins whose functions are no longer required. Therefore, the proteasome participates in numerous cellular processes, including cell cycle progression, apoptosis, or DNA damage repair. This is 26S proteasome non-ATPase regulatory subunit 8 (Psmd8) from Mus musculus (Mouse).